The following is an 847-amino-acid chain: Acyl-homoserine lactone acylase QuiP (847 aa).

An N-terminal signal peptide occupies residues 1–26; the sequence is MASPAFMRFLPRCGAAAAFGTLLGLA. Ser-265 acts as the Nucleophile in catalysis.

Belongs to the peptidase S45 family. In terms of assembly, heterodimer of an alpha subunit and a beta subunit processed from the same precursor.

It is found in the periplasm. The enzyme catalyses an N-acyl-L-homoserine lactone + H2O = L-homoserine lactone + a carboxylate. Its function is as follows. Catalyzes the deacylation of acyl-homoserine lactone (AHL or acyl-HSL), releasing homoserine lactone (HSL) and the corresponding fatty acid. Possesses a specificity for the degradation of long-chain acyl-HSLs (side chains of seven or more carbons in length). Appears to be the acyl-HSL acylase that underlies the ability of P.aeruginosa to degrade and utilize certain acyl-HSLs as growth nutrients, including one of its own quorum signals, 3-oxo-C12-HSL. Is thought to have a role in quorum quenching. This Pseudomonas aeruginosa (strain ATCC 15692 / DSM 22644 / CIP 104116 / JCM 14847 / LMG 12228 / 1C / PRS 101 / PAO1) protein is Acyl-homoserine lactone acylase QuiP (quiP).